A 375-amino-acid chain; its full sequence is Muconate cycloisomerase 1 (375 aa).

Catalysis depends on Lys171, which acts as the Proton acceptor. Asp200, Glu226, and Asp251 together coordinate Mn(2+). Glu329 functions as the Proton donor in the catalytic mechanism.

It belongs to the mandelate racemase/muconate lactonizing enzyme family. In terms of assembly, homooctamer. The cofactor is Mn(2+).

It carries out the reaction (S)-muconolactone = cis,cis-muconate + H(+). Its pathway is aromatic compound metabolism; beta-ketoadipate pathway; 5-oxo-4,5-dihydro-2-furylacetate from catechol: step 2/3. In terms of biological role, catalyzes a syn cycloisomerization. The protein is Muconate cycloisomerase 1 (catB) of Pseudomonas putida (Arthrobacter siderocapsulatus).